The sequence spans 186 residues: Peptide deformylase (186 aa).

The Fe cation site is built by Cys99 and His141. Glu142 is an active-site residue. His145 contacts Fe cation.

It belongs to the polypeptide deformylase family. Fe(2+) is required as a cofactor.

The enzyme catalyses N-terminal N-formyl-L-methionyl-[peptide] + H2O = N-terminal L-methionyl-[peptide] + formate. Removes the formyl group from the N-terminal Met of newly synthesized proteins. Requires at least a dipeptide for an efficient rate of reaction. N-terminal L-methionine is a prerequisite for activity but the enzyme has broad specificity at other positions. This Chlamydia felis (strain Fe/C-56) (Chlamydophila felis) protein is Peptide deformylase.